We begin with the raw amino-acid sequence, 485 residues long: RAC-beta serine/threonine-protein kinase B (485 aa).

The 105-residue stretch at 5-109 (MVIKEGWLQK…WIIAIQTVAN (105 aa)) folds into the PH domain. O-linked (GlcNAc) serine glycans are attached at residues Ser132 and Ser135. The Protein kinase domain maps to 156–413 (FDYLKLLGKG…AQEVMSHGFF (258 aa)). ATP is bound by residues 162–170 (LGKGTFGKV) and Lys185. Asp279 functions as the Proton acceptor in the catalytic mechanism. An O-linked (GlcNAc) threonine glycan is attached at Thr310. A Phosphothreonine modification is found at Thr313. Thr317 carries O-linked (GlcNAc) threonine glycosylation. Residues 414–485 (ASINWQDVTE…QFSYSSSIRE (72 aa)) enclose the AGC-kinase C-terminal domain. Positions 454-485 (LTPPDRYDNLDALESEQRPHFPQFSYSSSIRE) are disordered. The segment covering 458–472 (DRYDNLDALESEQRP) has biased composition (basic and acidic residues). Ser478 bears the Phosphoserine mark. A glycan (O-linked (GlcNAc) serine; alternate) is linked at Ser478.

It belongs to the protein kinase superfamily. AGC Ser/Thr protein kinase family. RAC subfamily. Post-translationally, phosphorylation on Thr-313 and Ser-478 is required for full activity. Phosphorylation of the activation loop at Thr-313 by PDPK1/PDK1 is a prerequisite for full activation. Phosphorylation by mTORC2 at Ser-478 in response to growth factors plays a key role in AKT1 activation by facilitating subsequent phosphorylation of the activation loop by PDPK1/PDK1.

It carries out the reaction L-seryl-[protein] + ATP = O-phospho-L-seryl-[protein] + ADP + H(+). It catalyses the reaction L-threonyl-[protein] + ATP = O-phospho-L-threonyl-[protein] + ADP + H(+). Its activity is regulated as follows. Two specific sites, one in the kinase domain (Thr-313) and the other in the C-terminal regulatory region (Ser-478), need to be phosphorylated for its full activation. Akt2-b is one of several closely related serine/threonine-protein kinases known as the AKT kinase, and which regulate many processes including metabolism, proliferation, cell survival, growth and angiogenesis. This is mediated through serine and/or threonine phosphorylation of a range of downstream substrates. Over 100 substrate candidates have been reported so far, but for most of them, no isoform specificity has been reported. May be involved in the inhibition of ciliogenesis. This chain is RAC-beta serine/threonine-protein kinase B (akt2-b), found in Xenopus laevis (African clawed frog).